The following is a 174-amino-acid chain: ATP-dependent protease subunit HslV (174 aa).

Threonine 2 is a catalytic residue. Na(+)-binding residues include glycine 157, cysteine 160, and threonine 163.

This sequence belongs to the peptidase T1B family. HslV subfamily. A double ring-shaped homohexamer of HslV is capped on each side by a ring-shaped HslU homohexamer. The assembly of the HslU/HslV complex is dependent on binding of ATP.

It is found in the cytoplasm. The catalysed reaction is ATP-dependent cleavage of peptide bonds with broad specificity.. Allosterically activated by HslU binding. Functionally, protease subunit of a proteasome-like degradation complex believed to be a general protein degrading machinery. The polypeptide is ATP-dependent protease subunit HslV (Shewanella piezotolerans (strain WP3 / JCM 13877)).